The following is a 406-amino-acid chain: Argininosuccinate synthase (406 aa).

Residues 12–20 (AYSGGLDTS) and Ala39 contribute to the ATP site. L-citrulline-binding residues include Tyr90 and Ser95. Residue Gly120 coordinates ATP. L-aspartate is bound by residues Thr122, Asn126, and Asp127. Position 126 (Asn126) interacts with L-citrulline. Positions 130, 179, 188, 264, and 276 each coordinate L-citrulline.

This sequence belongs to the argininosuccinate synthase family. Type 1 subfamily. As to quaternary structure, homotetramer.

It localises to the cytoplasm. The enzyme catalyses L-citrulline + L-aspartate + ATP = 2-(N(omega)-L-arginino)succinate + AMP + diphosphate + H(+). It participates in amino-acid biosynthesis; L-arginine biosynthesis; L-arginine from L-ornithine and carbamoyl phosphate: step 2/3. The protein is Argininosuccinate synthase of Geotalea daltonii (strain DSM 22248 / JCM 15807 / FRC-32) (Geobacter daltonii).